The following is a 256-amino-acid chain: 1-(5-phosphoribosyl)-5-[(5-phosphoribosylamino)methylideneamino] imidazole-4-carboxamide isomerase (256 aa).

Aspartate 8 acts as the Proton acceptor in catalysis. Aspartate 129 acts as the Proton donor in catalysis.

It belongs to the HisA/HisF family.

Its subcellular location is the cytoplasm. It carries out the reaction 1-(5-phospho-beta-D-ribosyl)-5-[(5-phospho-beta-D-ribosylamino)methylideneamino]imidazole-4-carboxamide = 5-[(5-phospho-1-deoxy-D-ribulos-1-ylimino)methylamino]-1-(5-phospho-beta-D-ribosyl)imidazole-4-carboxamide. It participates in amino-acid biosynthesis; L-histidine biosynthesis; L-histidine from 5-phospho-alpha-D-ribose 1-diphosphate: step 4/9. This Synechococcus elongatus (strain ATCC 33912 / PCC 7942 / FACHB-805) (Anacystis nidulans R2) protein is 1-(5-phosphoribosyl)-5-[(5-phosphoribosylamino)methylideneamino] imidazole-4-carboxamide isomerase.